Consider the following 469-residue polypeptide: Probable Xaa-Pro aminopeptidase PEPP (469 aa).

Mn(2+) contacts are provided by Asp-265, Asp-276, Glu-399, and Glu-439.

It belongs to the peptidase M24B family. Requires Mn(2+) as cofactor.

The enzyme catalyses Release of any N-terminal amino acid, including proline, that is linked to proline, even from a dipeptide or tripeptide.. Functionally, catalyzes the removal of a penultimate prolyl residue from the N-termini of peptides. This is Probable Xaa-Pro aminopeptidase PEPP (PEPP) from Coccidioides posadasii (strain C735) (Valley fever fungus).